A 225-amino-acid polypeptide reads, in one-letter code: Ribonuclease 3 (225 aa).

The 123-residue stretch at 5 to 127 (IDKLERKLGY…IIGAIYLDSD (123 aa)) folds into the RNase III domain. Position 40 (E40) interacts with Mg(2+). Residue D44 is part of the active site. 2 residues coordinate Mg(2+): D113 and E116. E116 is a catalytic residue. Residues 154-224 (DPKTRLQEFL…AETALEQLTN (71 aa)) enclose the DRBM domain.

The protein belongs to the ribonuclease III family. Homodimer. The cofactor is Mg(2+).

The protein resides in the cytoplasm. It catalyses the reaction Endonucleolytic cleavage to 5'-phosphomonoester.. Digests double-stranded RNA. Involved in the processing of primary rRNA transcript to yield the immediate precursors to the large and small rRNAs (23S and 16S). Processes some mRNAs, and tRNAs when they are encoded in the rRNA operon. Processes pre-crRNA and tracrRNA of type II CRISPR loci if present in the organism. The protein is Ribonuclease 3 of Vibrio campbellii (strain ATCC BAA-1116).